The sequence spans 493 residues: MSFKDLRSFIDHLEANGELKRISYPVDPHLEMTEIADRVLRAKGPALLFENPTNHSMPVLANLFGTPKRVAMALGKEDPLALRDVGELLAFLKEPEPPRGFKDAISKIPMFKQALNMPPKTVRNPACQQVVKTGDEVDLTQLPIQHCWPGDVAPLVTWGLTITKGPRKSRQNLGIYRQQLLGKNKLIMRWLSHRGGALDFADFKEQFPGERYPVVVALGSDPVTILGAVTPVPDAMSEYAFAGLLRGERTEVCKALSCDLEVPASSEIILEGYIDPDEMAEEGPYGDHTGYYNETDKFPVFTVTHITHRKDPIYHSTYTGRPPDEPAMLGVALNEVFVPILRKQYPEIIDFYLPPEGCSYRMAVISIRKQYPGHAKRVMMGAWSFLRQFMYTKFIVVVDDDVNCRDWNDVIWAITTRMDPKRDTVMIDNTPIDYLDFASPVAGLGSKMGLDATNKREGETNREWGTPIVMDPKVKQKIDSIWDELGIDDSPTL.

Residue Asn-172 participates in Mn(2+) binding. Residues 175–177, 189–191, and 194–195 each bind prenylated FMN; these read IYR, RWL, and RG. Glu-238 is a binding site for Mn(2+). The active-site Proton donor is Asp-287.

It belongs to the UbiD family. Homohexamer. It depends on prenylated FMN as a cofactor. Requires Mn(2+) as cofactor.

It localises to the cell membrane. The enzyme catalyses a 4-hydroxy-3-(all-trans-polyprenyl)benzoate + H(+) = a 2-(all-trans-polyprenyl)phenol + CO2. The protein operates within cofactor biosynthesis; ubiquinone biosynthesis. In terms of biological role, catalyzes the decarboxylation of 3-octaprenyl-4-hydroxy benzoate to 2-octaprenylphenol, an intermediate step in ubiquinone biosynthesis. In Shewanella sp. (strain MR-4), this protein is 3-octaprenyl-4-hydroxybenzoate carboxy-lyase.